The following is a 975-amino-acid chain: Glycine dehydrogenase (decarboxylating) (975 aa).

K723 is modified (N6-(pyridoxal phosphate)lysine).

It belongs to the GcvP family. As to quaternary structure, the glycine cleavage system is composed of four proteins: P, T, L and H. Pyridoxal 5'-phosphate serves as cofactor.

It carries out the reaction N(6)-[(R)-lipoyl]-L-lysyl-[glycine-cleavage complex H protein] + glycine + H(+) = N(6)-[(R)-S(8)-aminomethyldihydrolipoyl]-L-lysyl-[glycine-cleavage complex H protein] + CO2. The glycine cleavage system catalyzes the degradation of glycine. The P protein binds the alpha-amino group of glycine through its pyridoxal phosphate cofactor; CO(2) is released and the remaining methylamine moiety is then transferred to the lipoamide cofactor of the H protein. The chain is Glycine dehydrogenase (decarboxylating) from Burkholderia orbicola (strain MC0-3).